A 286-amino-acid polypeptide reads, in one-letter code: Pyridoxal kinase PdxY (286 aa).

Residues serine 9 and 44–45 (TQ) contribute to the substrate site. Residues aspartate 111, glutamate 148, and lysine 181 each contribute to the ATP site. Aspartate 222 contacts substrate.

This sequence belongs to the pyridoxine kinase family. PdxY subfamily. In terms of assembly, homodimer. The cofactor is Mg(2+).

The enzyme catalyses pyridoxal + ATP = pyridoxal 5'-phosphate + ADP + H(+). It participates in cofactor metabolism; pyridoxal 5'-phosphate salvage; pyridoxal 5'-phosphate from pyridoxal: step 1/1. In terms of biological role, pyridoxal kinase involved in the salvage pathway of pyridoxal 5'-phosphate (PLP). Catalyzes the phosphorylation of pyridoxal to PLP. The protein is Pyridoxal kinase PdxY of Actinobacillus succinogenes (strain ATCC 55618 / DSM 22257 / CCUG 43843 / 130Z).